The chain runs to 454 residues: Bifunctional protein GlmU (454 aa).

The interval 1-232 is pyrophosphorylase; that stretch reads MTDRTCLSIV…VDNVIGINNR (232 aa). UDP-N-acetyl-alpha-D-glucosamine-binding positions include 11–14, K25, Q78, and 83–84; these read LAAG and GT. D108 is a Mg(2+) binding site. UDP-N-acetyl-alpha-D-glucosamine-binding residues include G144, E158, N173, and N230. N230 contacts Mg(2+). The tract at residues 233–253 is linker; sequence AELAEAETIWQNRKRRELMLS. Positions 254 to 454 are N-acetyltransferase; sequence GVTLIAPETV…AIKAAKSVSK (201 aa). Residues R319 and K337 each coordinate UDP-N-acetyl-alpha-D-glucosamine. H349 (proton acceptor) is an active-site residue. UDP-N-acetyl-alpha-D-glucosamine-binding residues include Y352 and N363. Acetyl-CoA contacts are provided by residues A366, 372–373, S391, S409, and R426; that span reads NY.

The protein in the N-terminal section; belongs to the N-acetylglucosamine-1-phosphate uridyltransferase family. This sequence in the C-terminal section; belongs to the transferase hexapeptide repeat family. As to quaternary structure, homotrimer. Requires Mg(2+) as cofactor.

The protein localises to the cytoplasm. The catalysed reaction is alpha-D-glucosamine 1-phosphate + acetyl-CoA = N-acetyl-alpha-D-glucosamine 1-phosphate + CoA + H(+). The enzyme catalyses N-acetyl-alpha-D-glucosamine 1-phosphate + UTP + H(+) = UDP-N-acetyl-alpha-D-glucosamine + diphosphate. The protein operates within nucleotide-sugar biosynthesis; UDP-N-acetyl-alpha-D-glucosamine biosynthesis; N-acetyl-alpha-D-glucosamine 1-phosphate from alpha-D-glucosamine 6-phosphate (route II): step 2/2. It participates in nucleotide-sugar biosynthesis; UDP-N-acetyl-alpha-D-glucosamine biosynthesis; UDP-N-acetyl-alpha-D-glucosamine from N-acetyl-alpha-D-glucosamine 1-phosphate: step 1/1. Its pathway is bacterial outer membrane biogenesis; LPS lipid A biosynthesis. In terms of biological role, catalyzes the last two sequential reactions in the de novo biosynthetic pathway for UDP-N-acetylglucosamine (UDP-GlcNAc). The C-terminal domain catalyzes the transfer of acetyl group from acetyl coenzyme A to glucosamine-1-phosphate (GlcN-1-P) to produce N-acetylglucosamine-1-phosphate (GlcNAc-1-P), which is converted into UDP-GlcNAc by the transfer of uridine 5-monophosphate (from uridine 5-triphosphate), a reaction catalyzed by the N-terminal domain. The chain is Bifunctional protein GlmU from Brucella melitensis biotype 1 (strain ATCC 23456 / CCUG 17765 / NCTC 10094 / 16M).